The chain runs to 117 residues: Large ribosomal subunit protein uL18 (117 aa).

Belongs to the universal ribosomal protein uL18 family. Part of the 50S ribosomal subunit; part of the 5S rRNA/L5/L18/L25 subcomplex. Contacts the 5S and 23S rRNAs.

In terms of biological role, this is one of the proteins that bind and probably mediate the attachment of the 5S RNA into the large ribosomal subunit, where it forms part of the central protuberance. This chain is Large ribosomal subunit protein uL18, found in Francisella tularensis subsp. tularensis (strain FSC 198).